The primary structure comprises 319 residues: Aspartate carbamoyltransferase catalytic subunit (319 aa).

Carbamoyl phosphate contacts are provided by Arg65 and Thr66. Lys93 contributes to the L-aspartate binding site. Carbamoyl phosphate-binding residues include Arg115, His149, and Gln152. L-aspartate-binding residues include Arg182 and Arg237. Carbamoyl phosphate-binding residues include Gly278 and Pro279.

This sequence belongs to the aspartate/ornithine carbamoyltransferase superfamily. ATCase family. Heterododecamer (2C3:3R2) of six catalytic PyrB chains organized as two trimers (C3), and six regulatory PyrI chains organized as three dimers (R2).

It carries out the reaction carbamoyl phosphate + L-aspartate = N-carbamoyl-L-aspartate + phosphate + H(+). The protein operates within pyrimidine metabolism; UMP biosynthesis via de novo pathway; (S)-dihydroorotate from bicarbonate: step 2/3. In terms of biological role, catalyzes the condensation of carbamoyl phosphate and aspartate to form carbamoyl aspartate and inorganic phosphate, the committed step in the de novo pyrimidine nucleotide biosynthesis pathway. The chain is Aspartate carbamoyltransferase catalytic subunit from Dechloromonas aromatica (strain RCB).